Here is a 221-residue protein sequence, read N- to C-terminus: Ribosomal RNA small subunit methyltransferase Nep1 (221 aa).

S-adenosyl-L-methionine is bound by residues G174, G179, and 196–201 (VGDEPL).

It belongs to the class IV-like SAM-binding methyltransferase superfamily. RNA methyltransferase NEP1 family. Homodimer.

The enzyme catalyses a pseudouridine in rRNA + S-adenosyl-L-methionine = an N(1)-methylpseudouridine in rRNA + S-adenosyl-L-homocysteine + H(+). Its function is as follows. Methyltransferase involved in ribosomal biogenesis. Specifically catalyzes the N1-methylation of the pseudouridine corresponding to position 914 in M.jannaschii 16S rRNA. This Pyrobaculum neutrophilum (strain DSM 2338 / JCM 9278 / NBRC 100436 / V24Sta) (Thermoproteus neutrophilus) protein is Ribosomal RNA small subunit methyltransferase Nep1.